The primary structure comprises 294 residues: Protein huluwa (294 aa).

Residues 1–23 are Extracellular-facing; sequence MSQLGSAVPSSNLPEGLPVSSLA. The helical transmembrane segment at 24–44 threads the bilayer; sequence LLILVLIPCVLLLLLLNCLFV. Topologically, residues 45–294 are cytoplasmic; that stretch reads GYKLFRMTRR…PPITTKQYWV (250 aa). The tract at residues 154 to 175 is disordered; that stretch reads SDSDMERVNTVPPNSPVLRVTP. Residues 164–169 carry the VPPNSP motif motif; it reads VPPNSP. The SLRRSST motif signature appears at 184-190; it reads SLRRSST.

It belongs to the huluwa family. As to quaternary structure, interacts with axin1; leading to promote the tankyrase-mediated degradation of axin. Interacts with axin2; leading to promote the tankyrase-mediated degradation of axin.

The protein resides in the cell membrane. In terms of biological role, key maternal determinant of the dorsal organizer and body axis formation in vertebrates that acts by promoting stabilization of beta-catenin (ctnnb1). Localizes on the plasma membrane of the future dorsal blastomeres in early blastulas and binds to and promotes the tankyrase-mediated degradation of axin (axin1 and axin2). Axin degradation results in stabilization and nuclear translocation of beta-catenin (ctnnb1) for activating organizer-specific target gene expression. The chain is Protein huluwa from Danio rerio (Zebrafish).